Here is a 153-residue protein sequence, read N- to C-terminus: Small ribosomal subunit protein uS13 (153 aa).

A disordered region spans residues 134–153 (GQRTKSNGRRGRSMGVSRKK).

Belongs to the universal ribosomal protein uS13 family.

The protein localises to the cytoplasm. In terms of biological role, located at the top of the head of the 40S subunit, it contacts several helices of the 18S rRNA. This is Small ribosomal subunit protein uS13 (RPS18) from Encephalitozoon cuniculi (strain GB-M1) (Microsporidian parasite).